We begin with the raw amino-acid sequence, 366 residues long: Quinolinate synthase (366 aa).

Histidine 44 and serine 61 together coordinate iminosuccinate. Residue cysteine 108 coordinates [4Fe-4S] cluster. Residues 139–141 (YIN) and serine 160 contribute to the iminosuccinate site. Cysteine 228 lines the [4Fe-4S] cluster pocket. Residues 254–256 (HPE) and threonine 271 contribute to the iminosuccinate site. Cysteine 318 contributes to the [4Fe-4S] cluster binding site.

Belongs to the quinolinate synthase family. Type 3 subfamily. The cofactor is [4Fe-4S] cluster.

The protein localises to the cytoplasm. The catalysed reaction is iminosuccinate + dihydroxyacetone phosphate = quinolinate + phosphate + 2 H2O + H(+). It functions in the pathway cofactor biosynthesis; NAD(+) biosynthesis; quinolinate from iminoaspartate: step 1/1. Functionally, catalyzes the condensation of iminoaspartate with dihydroxyacetone phosphate to form quinolinate. The polypeptide is Quinolinate synthase (Listeria monocytogenes serotype 4b (strain F2365)).